Consider the following 148-residue polypeptide: Stathmin (148 aa).

The region spanning 4-145 (SDIQVKELEK…NKEGKDPGEA (142 aa)) is the SLD domain. At serine 16 the chain carries Phosphoserine; by PKA. Residue serine 38 is modified to Phosphoserine; by CDK1. The stretch at 41–140 (KKKDLSLEEI…EEVRKNKEGK (100 aa)) forms a coiled coil. Serine 63 carries the phosphoserine; by PKA modification. The disordered stretch occupies residues 122-148 (RLREKDKHIEEVRKNKEGKDPGEAETN).

Belongs to the stathmin family. Binds to two alpha/beta-tubulin heterodimers. Many different phosphorylated forms are observed depending on specific combinations among the sites which can be phosphorylated. MAPK is responsible for the phosphorylation of stathmin in response to NGF.

The protein localises to the cytoplasm. It is found in the cytoskeleton. Its function is as follows. Involved in the regulation of the microtubule (MT) filament system by destabilizing microtubules. It prevents assembly and promotes disassembly of microtubules. This is Stathmin (STMN1) from Gallus gallus (Chicken).